Here is a 482-residue protein sequence, read N- to C-terminus: tRNA sulfurtransferase (482 aa).

Positions 61-165 (LAIRDALTRI…DDRLLLIKGR (105 aa)) constitute a THUMP domain. ATP-binding positions include 183-184 (LI), lysine 265, glycine 287, and glutamine 296. Cysteine 344 and cysteine 456 are joined by a disulfide. One can recognise a Rhodanese domain in the interval 404–482 (FGPNDVILDI…GFENVKVYRP (79 aa)). Cysteine 456 functions as the Cysteine persulfide intermediate in the catalytic mechanism.

It belongs to the ThiI family.

It localises to the cytoplasm. It carries out the reaction [ThiI sulfur-carrier protein]-S-sulfanyl-L-cysteine + a uridine in tRNA + 2 reduced [2Fe-2S]-[ferredoxin] + ATP + H(+) = [ThiI sulfur-carrier protein]-L-cysteine + a 4-thiouridine in tRNA + 2 oxidized [2Fe-2S]-[ferredoxin] + AMP + diphosphate. The catalysed reaction is [ThiS sulfur-carrier protein]-C-terminal Gly-Gly-AMP + S-sulfanyl-L-cysteinyl-[cysteine desulfurase] + AH2 = [ThiS sulfur-carrier protein]-C-terminal-Gly-aminoethanethioate + L-cysteinyl-[cysteine desulfurase] + A + AMP + 2 H(+). The protein operates within cofactor biosynthesis; thiamine diphosphate biosynthesis. Its function is as follows. Catalyzes the ATP-dependent transfer of a sulfur to tRNA to produce 4-thiouridine in position 8 of tRNAs, which functions as a near-UV photosensor. Also catalyzes the transfer of sulfur to the sulfur carrier protein ThiS, forming ThiS-thiocarboxylate. This is a step in the synthesis of thiazole, in the thiamine biosynthesis pathway. The sulfur is donated as persulfide by IscS. The polypeptide is tRNA sulfurtransferase (Salmonella enteritidis PT4 (strain P125109)).